Consider the following 567-residue polypeptide: MRQSQGFIPTLREVPADAEVKSHQLLLRAGFVRQSASGVYTFLPLGQRVLQKVEAIIREEMNRAGALELLMPALQPAELWQQSGRWYSYGPELMRLKDRHERDFVLGPTHEEMITTIVRDEVKTYKRLPLILYQIQTKFRDEKRPRFGLLRGREFIMKDAYSFHTSQESLDETYNKMYEAYANIFRRCGLNFRAVIADSGAMGGKDTHEFMVLSDIGEDTIAYSDASDYAANIEMAPVVTTYEKSSEPLVELKKVATPEQKTIAEVASYLQVAPERCIKSLLFNVDGRYVLVLVRGDHEANDVKVKNVLDATVVELATPEETERVMNCPVGSLGPIGVSEEVTIIADHAVAAIVNGVCGANEEGYHYTGVNPDRDFAVSQYADLRFVQEGDPSPDGNGTIRFARGIEVGHVFKLGTKYSEAMNAVYLDENGRTQTMIMGCYGIGVSRLVAAIAEQFADENGLVWPVSVAPFHVHLLTANAKSDEQRMLAEEWYEKLGQAGFDVLYDDRPERAGVKFADSDLIGIPLRVTVGKRASEGVVEVKVRKTGETFDVPVGELIETVRRLLQG.

The protein belongs to the class-II aminoacyl-tRNA synthetase family. ProS type 1 subfamily. In terms of assembly, homodimer.

It localises to the cytoplasm. The catalysed reaction is tRNA(Pro) + L-proline + ATP = L-prolyl-tRNA(Pro) + AMP + diphosphate. Functionally, catalyzes the attachment of proline to tRNA(Pro) in a two-step reaction: proline is first activated by ATP to form Pro-AMP and then transferred to the acceptor end of tRNA(Pro). As ProRS can inadvertently accommodate and process non-cognate amino acids such as alanine and cysteine, to avoid such errors it has two additional distinct editing activities against alanine. One activity is designated as 'pretransfer' editing and involves the tRNA(Pro)-independent hydrolysis of activated Ala-AMP. The other activity is designated 'posttransfer' editing and involves deacylation of mischarged Ala-tRNA(Pro). The misacylated Cys-tRNA(Pro) is not edited by ProRS. This is Proline--tRNA ligase from Geobacillus thermodenitrificans (strain NG80-2).